A 1196-amino-acid polypeptide reads, in one-letter code: FIP1[V]-like protein (1196 aa).

5 disordered regions span residues Met1–Gly102, Gly117–Tyr248, Gly268–Leu300, Gly413–Arg472, and Ser485–Pro1174. The span at Phe18–Pro31 shows a compositional bias: pro residues. Residues Gly117–Glu126 show a composition bias toward polar residues. The segment covering Val129–Gly141 has biased composition (gly residues). Composition is skewed to acidic residues over residues Glu142–Leu154 and Asn179–Pro190. Gly residues predominate over residues Ala226–Thr236. Residues Gly268–Gly278 are compositionally biased toward low complexity. Over residues Lys518 to Arg548 the composition is skewed to basic and acidic residues. The span at Ser549 to Pro561 shows a compositional bias: polar residues. 2 stretches are compositionally biased toward basic and acidic residues: residues Arg565 to Lys592 and Gly608 to Ser641. Positions Arg643–His657 are enriched in polar residues. 5 stretches are compositionally biased toward basic and acidic residues: residues Lys661–Arg673, Ser699–Glu802, Ser810–Arg918, Arg925–Ala945, and Asn953–Asp971. Short sequence motifs (nuclear localization signal) lie at residues Asp704–Val711 and Arg734–Asp741. The segment covering Glu998 to Ala1021 has biased composition (polar residues). 3 stretches are compositionally biased toward basic and acidic residues: residues Asp1046–Val1071, Lys1103–Lys1137, and Thr1151–Ser1163.

This sequence belongs to the FIP1 family. Component of the cleavage and polyadenylation specificity factor (CPSF) complex. Forms a complex with cleavage and polyadenylation specificity factor (CPSF) subunits CFIS1, CFIS2, CPSF30, CSTF50, CSTF64, CSTF77, FIPS3, PABN1, PABN2, PABN3, PAPS4, CFIM25 and PABN1. Binds RNA. As to expression, expressed in leaves, stems, flower tissues and roots.

Its subcellular location is the nucleus. Functionally, essential gene. Component of the cleavage and polyadenylation specificity factor (CPSF) complex that plays a key role in pre-mRNA 3'-end formation, recognizing the AAUAAA signal sequence and interacting with poly(A) polymerase and other factors to bring about cleavage and poly(A) addition. FIP1L1 contributes to poly(A) site recognition and stimulates poly(A) addition. Binds to U-rich RNA sequence elements surrounding the poly(A) site. May act to tether poly(A) polymerase to the CPSF complex. In Arabidopsis thaliana (Mouse-ear cress), this protein is FIP1[V]-like protein.